The sequence spans 429 residues: Cytochrome c biogenesis protein CcsB (429 aa).

A run of 3 helical transmembrane segments spans residues 14-34, 72-92, and 162-182; these read LKVAIVLLILIALGSALGTAL, SFWFLFLLTWLSFSLIICSWK, and VGPPLVHFGLILLIIGATYGV.

The protein belongs to the Ccs1/CcsB family. As to quaternary structure, may interact with CcsA.

The protein resides in the cellular thylakoid membrane. Functionally, required during biogenesis of c-type cytochromes (cytochrome c6 and cytochrome f) at the step of heme attachment. The chain is Cytochrome c biogenesis protein CcsB from Prochlorococcus marinus (strain SARG / CCMP1375 / SS120).